The sequence spans 495 residues: Flagellin (495 aa).

This sequence belongs to the bacterial flagellin family.

It localises to the secreted. The protein localises to the bacterial flagellum. In terms of biological role, flagellin is the subunit protein which polymerizes to form the filaments of bacterial flagella. This chain is Flagellin (fliC), found in Salmonella paratyphi A (strain ATCC 9150 / SARB42).